Consider the following 283-residue polypeptide: Polyamine aminopropyltransferase (283 aa).

The 234-residue stretch at 5-238 folds into the PABS domain; sequence PTWIDEYHKG…GIWSWTFASD (234 aa). Gln-32 provides a ligand contact to S-methyl-5'-thioadenosine. Positions 63 and 87 each coordinate spermidine. S-methyl-5'-thioadenosine contacts are provided by residues Glu-107 and 139 to 140; that span reads DG. Asp-158 (proton acceptor) is an active-site residue. 158 to 161 contributes to the spermidine binding site; the sequence is DCSD.

This sequence belongs to the spermidine/spermine synthase family. As to quaternary structure, homodimer or homotetramer.

It localises to the cytoplasm. The catalysed reaction is S-adenosyl 3-(methylsulfanyl)propylamine + putrescine = S-methyl-5'-thioadenosine + spermidine + H(+). It functions in the pathway amine and polyamine biosynthesis; spermidine biosynthesis; spermidine from putrescine: step 1/1. Its function is as follows. Catalyzes the irreversible transfer of a propylamine group from the amino donor S-adenosylmethioninamine (decarboxy-AdoMet) to putrescine (1,4-diaminobutane) to yield spermidine. This chain is Polyamine aminopropyltransferase, found in Prochlorococcus marinus subsp. pastoris (strain CCMP1986 / NIES-2087 / MED4).